Reading from the N-terminus, the 402-residue chain is Endoglucanase 1 (402 aa).

The residue at position 1 (Q1) is a Pyrrolidone carboxylic acid. Disulfide bonds link C18/C24, C51/C73, and C63/C69. N-linked (GlcNAc...) asparagine glycosylation occurs at N89. 6 disulfides stabilise this stretch: C140/C365, C172/C195, C176/C194, C215/C234, C223/C228, and C239/C315. The active-site Nucleophile is the E197. Residue E202 is the Proton donor of the active site. N-linked (GlcNAc...) asparagine glycosylation occurs at N247.

Belongs to the glycosyl hydrolase 7 (cellulase C) family. In terms of assembly, monomer.

The protein localises to the secreted. It catalyses the reaction Endohydrolysis of (1-&gt;4)-beta-D-glucosidic linkages in cellulose, lichenin and cereal beta-D-glucans.. Its function is as follows. The biological conversion of cellulose to glucose generally requires three types of hydrolytic enzymes: (1) Endoglucanases which cut internal beta-1,4-glucosidic bonds; (2) Exocellobiohydrolases that cut the disaccharide cellobiose from the non-reducing end of the cellulose polymer chain; (3) Beta-1,4-glucosidases which hydrolyze the cellobiose and other short cello-oligosaccharides to glucose. The sequence is that of Endoglucanase 1 (CEL7B) from Humicola insolens (Soft-rot fungus).